The primary structure comprises 189 residues: Hypoxanthine/guanine phosphoribosyltransferase (189 aa).

The protein belongs to the purine/pyrimidine phosphoribosyltransferase family. Archaeal HPRT subfamily. Homodimer.

Its subcellular location is the cytoplasm. It carries out the reaction IMP + diphosphate = hypoxanthine + 5-phospho-alpha-D-ribose 1-diphosphate. The catalysed reaction is GMP + diphosphate = guanine + 5-phospho-alpha-D-ribose 1-diphosphate. It functions in the pathway purine metabolism; IMP biosynthesis via salvage pathway; IMP from hypoxanthine: step 1/1. In terms of biological role, catalyzes a salvage reaction resulting in the formation of IMP that is energically less costly than de novo synthesis. The chain is Hypoxanthine/guanine phosphoribosyltransferase (hpt) from Methanosarcina acetivorans (strain ATCC 35395 / DSM 2834 / JCM 12185 / C2A).